The chain runs to 290 residues: Bifunctional protein FolD (290 aa).

NADP(+) is bound by residues 166 to 168 (GQS), Ser191, and Ile232.

It belongs to the tetrahydrofolate dehydrogenase/cyclohydrolase family. Homodimer.

It carries out the reaction (6R)-5,10-methylene-5,6,7,8-tetrahydrofolate + NADP(+) = (6R)-5,10-methenyltetrahydrofolate + NADPH. The enzyme catalyses (6R)-5,10-methenyltetrahydrofolate + H2O = (6R)-10-formyltetrahydrofolate + H(+). It participates in one-carbon metabolism; tetrahydrofolate interconversion. Catalyzes the oxidation of 5,10-methylenetetrahydrofolate to 5,10-methenyltetrahydrofolate and then the hydrolysis of 5,10-methenyltetrahydrofolate to 10-formyltetrahydrofolate. In Halorhodospira halophila (strain DSM 244 / SL1) (Ectothiorhodospira halophila (strain DSM 244 / SL1)), this protein is Bifunctional protein FolD.